Consider the following 362-residue polypeptide: Heat-inducible transcription repressor HrcA (362 aa).

The protein belongs to the HrcA family.

Its function is as follows. Negative regulator of class I heat shock genes (grpE-dnaK-dnaJ and groELS operons). Prevents heat-shock induction of these operons. This chain is Heat-inducible transcription repressor HrcA, found in Rhodopseudomonas palustris (strain ATCC BAA-98 / CGA009).